The chain runs to 33 residues: Pardaxin P-4 (33 aa).

This sequence belongs to the pardaxin family. As to quaternary structure, monomer. In aqueous solution exists as a tetramer.

It is found in the secreted. The protein localises to the target cell membrane. Exhibits unusual shark repellent and surfactant properties. Forms voltage-dependent, ion-permeable channels in membranes. At high concentration causes cell membrane lysis. This is Pardaxin P-4 from Pardachirus marmoratus (Finless sole).